The following is a 382-amino-acid chain: UDP-4-amino-4-deoxy-L-arabinose--oxoglutarate aminotransferase (382 aa).

N6-(pyridoxal phosphate)lysine is present on Lys-183.

The protein belongs to the DegT/DnrJ/EryC1 family. ArnB subfamily. In terms of assembly, homodimer. The cofactor is pyridoxal 5'-phosphate.

It carries out the reaction UDP-4-amino-4-deoxy-beta-L-arabinose + 2-oxoglutarate = UDP-beta-L-threo-pentopyranos-4-ulose + L-glutamate. The protein operates within nucleotide-sugar biosynthesis; UDP-4-deoxy-4-formamido-beta-L-arabinose biosynthesis; UDP-4-deoxy-4-formamido-beta-L-arabinose from UDP-alpha-D-glucuronate: step 2/3. It functions in the pathway bacterial outer membrane biogenesis; lipopolysaccharide biosynthesis. Catalyzes the conversion of UDP-4-keto-arabinose (UDP-Ara4O) to UDP-4-amino-4-deoxy-L-arabinose (UDP-L-Ara4N). The modified arabinose is attached to lipid A and is required for resistance to polymyxin and cationic antimicrobial peptides. The protein is UDP-4-amino-4-deoxy-L-arabinose--oxoglutarate aminotransferase of Pseudomonas aeruginosa (strain ATCC 15692 / DSM 22644 / CIP 104116 / JCM 14847 / LMG 12228 / 1C / PRS 101 / PAO1).